A 326-amino-acid chain; its full sequence is Cyclin-dependent kinase 1 (326 aa).

The Protein kinase domain occupies 16–306 (FTKLEKIGEG…SKKALHHPYF (291 aa)). ATP-binding positions include 22 to 30 (IGEGTYGVV) and Lys-45. Asp-140 serves as the catalytic Proton acceptor.

The protein belongs to the protein kinase superfamily. CMGC Ser/Thr protein kinase family. CDC2/CDKX subfamily. In terms of assembly, forms a stable but non-covalent complex with a regulatory subunit and with a cyclin. Interacts with cks-1.

The protein resides in the nucleus. The protein localises to the cytoplasm. It localises to the cytoskeleton. Its subcellular location is the microtubule organizing center. It is found in the centrosome. The catalysed reaction is L-seryl-[protein] + ATP = O-phospho-L-seryl-[protein] + ADP + H(+). It catalyses the reaction L-threonyl-[protein] + ATP = O-phospho-L-threonyl-[protein] + ADP + H(+). It carries out the reaction [DNA-directed RNA polymerase] + ATP = phospho-[DNA-directed RNA polymerase] + ADP + H(+). With respect to regulation, phosphorylation both activates and inactivates the enzyme depending on the site of phosphorylation. In terms of biological role, plays a key role in the control of the eukaryotic cell cycle. Required for entry into S-phase and mitosis. Acts as a component of the kinase complex that phosphorylates the repetitive C-terminus of RNA polymerase II. May function in concert with npp-16 to arrest prophase blastomeres in response to anoxia. This chain is Cyclin-dependent kinase 1, found in Caenorhabditis briggsae.